The following is a 2193-amino-acid chain: Non-reducing polyketide synthase esdpA (2193 aa).

The Starter acyltransferase (SAT) domain maps to 90 to 252 (NVLLAPLTVL…AKVQVNGRYH (163 aa)). One can recognise a Ketosynthase family 3 (KS3) domain in the interval 381 to 797 (DECVAIVGAA…GNNTVIIVCE (417 aa)). Active-site for beta-ketoacyl synthase activity residues include Cys-546, His-682, and His-720. The region spanning 906–1158 (VFSGQSGMTV…YFVDAVRRIK (253 aa)) is the Malonyl-CoA:ACP transacylase (MAT) domain. Ser-992 functions as the For acyl/malonyl transferase activity in the catalytic mechanism. The N-terminal hotdog fold stretch occupies residues 1265–1392 (PPMLSLENFS…GRVVLEDRRR (128 aa)). A PKS/mFAS DH domain is found at 1265-1569 (PPMLSLENFS…FVKISSHILQ (305 aa)). The segment at 1419–1569 (VFSASGSIAY…FVKISSHILQ (151 aa)) is C-terminal hotdog fold. Asp-1479 (proton donor; for dehydratase activity) is an active-site residue. One can recognise a Carrier domain in the interval 1723–1799 (RILSDSMIKL…ELHDLMQSHP (77 aa)). Ser-1759 carries the post-translational modification O-(pantetheine 4'-phosphoryl)serine. The segment at 1944 to 2177 (YHGSEHKLLR…GFTHVDWSND (234 aa)) is methyltransferase (CMeT) domain.

Requires pantetheine 4'-phosphate as cofactor.

The protein operates within secondary metabolite biosynthesis; terpenoid biosynthesis. Its function is as follows. Non-reducing polyketide synthase; part of the cluster that mediates the biosynthesis of shearones, diterpenoid pyrones (DPs) which are structurally diverse meroterpenoids consisting of a diterpene linked by a pyrone, and which may exhibit a range of bioactivities. Whitin the pathway, esdpA takes part to the biosynthesis of the molecular scaffold via the production of the alpha-pyrone from one molecule of acetyl-CoA, two molecules of malonyl-CoA and one molecule of S-adenosyl-L-methionine (SAM). The molecular scaffold is commonly biosynthesized by a series of enzymes including the non-reducing polyketide synthase (NR-PKS) esdpA that generates an alpha-pyrone; the prenyltransferase esdpC that attaches a geranylgeranyl pyrophosphate (GGPP) produced by the GGPP synthase (GGPPS) esdpD onto the pyrone unit; the FAD-dependent monooxygenase esdpE that converts an olefin on the diterpene unit into an epoxide; and the terpene cyclase esdpB that catalyzes the cyclization reactions to give the molecular backbone shearone A. In the modification steps, esdpF oxidizes the hydroxy group to a ketone at C-3 and esdpG then attaches hydroxy groups at both C-11 and C-12. After that, esdpI hydroxylates at C-20 and esdpH hydroxylates at C-6'. The ether bridge is generated by nucleophilic attack of the hydroxy group at C-20 to the carbonyl carbon at C-3. EsdpH can also functions prior to esdpI. The different combinations of these modification enzymes lead to the production of diverse shearone derivatives, shearone I being the end product of the pathway. The alpha-ketoglutarate-dependent dioxygenase esdpJ seems not to be involved in this pathway. In Penicillium shearii (Eupenicillium shearii), this protein is Non-reducing polyketide synthase esdpA.